Reading from the N-terminus, the 551-residue chain is Chaperonin GroEL (551 aa).

ATP contacts are provided by residues 30–33 (TLGP), lysine 51, 87–91 (DGTTT), glycine 415, 479–481 (NAA), and aspartate 495.

Belongs to the chaperonin (HSP60) family. In terms of assembly, forms a cylinder of 14 subunits composed of two heptameric rings stacked back-to-back. Interacts with the co-chaperonin GroES.

The protein localises to the cytoplasm. The catalysed reaction is ATP + H2O + a folded polypeptide = ADP + phosphate + an unfolded polypeptide.. Its function is as follows. Together with its co-chaperonin GroES, plays an essential role in assisting protein folding. The GroEL-GroES system forms a nano-cage that allows encapsulation of the non-native substrate proteins and provides a physical environment optimized to promote and accelerate protein folding. This is Chaperonin GroEL from Acidithiobacillus ferrooxidans (strain ATCC 23270 / DSM 14882 / CIP 104768 / NCIMB 8455) (Ferrobacillus ferrooxidans (strain ATCC 23270)).